A 512-amino-acid chain; its full sequence is Capsid scaffolding protein (512 aa).

Active-site charge relay system residues include His-47, Ser-115, and His-131. An interaction with pAP region spans residues 264–282 (DLISTICSTTHTTHHDLVR). The interval 376–407 (RGSQKRCAPTDSDDEMSFPGDPDYTTKKKKRY) is disordered. Residues 402–408 (KKKKRYR) carry the Nuclear localization signal motif. The tract at residues 492–512 (DQSLLSLNKKLFVEALNKMDN) is interaction with major capsid protein.

It belongs to the herpesviridae capsid scaffolding protein family. As to quaternary structure, homomultimer. Interacts with major capsid protein. In terms of assembly, exists in a monomer-dimer equilibrium with the dimer being the active species. Capsid scaffolding protein is cleaved by assemblin after formation of the spherical procapsid. As a result, the capsid obtains its mature, icosahedral shape. Cleavages occur at two or more sites: release (R-site) and maturation (M-site).

It is found in the host cytoplasm. Its subcellular location is the host nucleus. It carries out the reaction Cleaves -Ala-|-Ser- and -Ala-|-Ala- bonds in the scaffold protein.. Its function is as follows. Acts as a scaffold protein by binding major capsid protein in the cytoplasm, inducing the nuclear localization of both proteins. Multimerizes in the nucleus such as major capsid protein forms the icosahedral T=16 capsid. Autocatalytic cleavage releases the assembly protein, and subsequently abolishes interaction with major capsid protein. Cleavages products are evicted from the capsid before or during DNA packaging. Functionally, protease that plays an essential role in virion assembly within the nucleus. Catalyzes the cleavage of the assembly protein after formation of the spherical procapsid. By that cleavage, the capsid matures and gains its icosahedral shape. The cleavage sites seem to include -Ala-Ser-, -Ala-Ala-, as well as Ala-Thr bonds. Assemblin and cleavages products are evicted from the capsid before or during DNA packaging. In terms of biological role, plays a major role in capsid assembly. Acts as a scaffold protein by binding major capsid protein. Multimerizes in the nucleus such as major capsid protein forms the icosahedral T=16 capsid. Cleaved by assemblin after capsid completion. The cleavages products are evicted from the capsid before or during DNA packaging. The polypeptide is Capsid scaffolding protein (U53) (Human herpesvirus 7 (strain JI) (HHV-7)).